Reading from the N-terminus, the 916-residue chain is Isoleucine--tRNA ligase (916 aa).

A 'HIGH' region motif is present at residues 58-68 (PYANGHLHIGH). Position 568 (glutamate 568) interacts with L-isoleucyl-5'-AMP. The 'KMSKS' region signature appears at 609 to 613 (KMSKS). ATP is bound at residue lysine 612. 4 residues coordinate Zn(2+): cysteine 891, cysteine 894, cysteine 906, and cysteine 909.

Belongs to the class-I aminoacyl-tRNA synthetase family. IleS type 1 subfamily. In terms of assembly, monomer. The cofactor is Zn(2+).

Its subcellular location is the cytoplasm. It carries out the reaction tRNA(Ile) + L-isoleucine + ATP = L-isoleucyl-tRNA(Ile) + AMP + diphosphate. In terms of biological role, catalyzes the attachment of isoleucine to tRNA(Ile). As IleRS can inadvertently accommodate and process structurally similar amino acids such as valine, to avoid such errors it has two additional distinct tRNA(Ile)-dependent editing activities. One activity is designated as 'pretransfer' editing and involves the hydrolysis of activated Val-AMP. The other activity is designated 'posttransfer' editing and involves deacylation of mischarged Val-tRNA(Ile). This Campylobacter fetus subsp. fetus (strain 82-40) protein is Isoleucine--tRNA ligase.